A 430-amino-acid chain; its full sequence is MKASVFKSLYFQVLTAITLGVLLGHFYPELGAQMKPLGDGFVKLIKMIIAPVIFCTVVTGIAGMESMKAVGRTGAIALLYFEIVSTIALLIGLVIVNVVQPGAGMNIDPATLDAKAVALYAEQASQQGIIPFLLDIIPGSVVGAFASGNILQVLLFAVLFGFALHRLGEKGQLIFNVIESFSRVIFGIINMIMRLAPIGAFGAMAFTIGKYGVGSLVQLGQLIICFYITCVLFVVVVLGSIAKFNGFNIFKFIRYIKEELLIVLGTSSSESVLPRMLDKMEKAGCKKSVVGLVIPTGYSFNLDGTSIYLTMAAVFIAQATNTHMDVIHQVTLLVVLLLSSKGAAGVTGSGFIVLAATISAVGHLPLAGLALILGIDRFMSEARALTNLVGNGVATIVVAKWCNQLDNDQLQAVLSNKTLPNNEIKSSTSA.

The next 9 membrane-spanning stretches (helical) occupy residues 8 to 28 (SLYF…HFYP), 44 to 64 (LIKM…IAGM), 76 to 96 (IALL…LVIV), 144 to 164 (AFAS…GFAL), 184 to 204 (VIFG…FGAM), 222 to 242 (LIIC…GSIA), 289 to 309 (VVGL…SIYL), 326 to 346 (VIHQ…AAGV), and 352 to 372 (IVLA…LALI).

It belongs to the dicarboxylate/amino acid:cation symporter (DAACS) (TC 2.A.23) family.

The protein localises to the cell inner membrane. Responsible for the transport of dicarboxylates such as succinate, fumarate, and malate from the periplasm across the membrane. The sequence is that of C4-dicarboxylate transport protein from Yersinia enterocolitica serotype O:8 / biotype 1B (strain NCTC 13174 / 8081).